Consider the following 143-residue polypeptide: MFLGTYTPKLDDKGRLTLPAKFREDLAGGLMVTKGQDHSLAVYPKEEFAARARKAAAVSRTNPEARAFIRNLAASADEQRPDGQGRITLSAAHRTYAGLTKECVVIGSVDFLEIWDAQAWAAYQEETEAAFSAAEDDVLGGLL.

2 SpoVT-AbrB domains span residues 5-47 (TYTP…PKEE) and 76-119 (ADEQ…DAQA).

Belongs to the MraZ family. Forms oligomers.

It localises to the cytoplasm. Its subcellular location is the nucleoid. In Corynebacterium glutamicum (strain R), this protein is Transcriptional regulator MraZ.